Reading from the N-terminus, the 234-residue chain is Ubiquitin thioesterase OTUB2 (234 aa).

An OTU domain is found at Thr40–Ala231. Asp48 is a catalytic residue. Cys51 (nucleophile) is an active-site residue. Residue His224 is part of the active site.

This sequence belongs to the peptidase C65 family. Widely expressed. Expressed at higher level in brain.

The enzyme catalyses Thiol-dependent hydrolysis of ester, thioester, amide, peptide and isopeptide bonds formed by the C-terminal Gly of ubiquitin (a 76-residue protein attached to proteins as an intracellular targeting signal).. Its function is as follows. Hydrolase that can remove conjugated ubiquitin from proteins in vitro and may therefore play an important regulatory role at the level of protein turnover by preventing degradation. Mediates deubiquitination of 'Lys-11'-,'Lys-48'- and 'Lys-63'-linked polyubiquitin chains, with a preference for 'Lys-63'-linked polyubiquitin chains. This is Ubiquitin thioesterase OTUB2 (OTUB2) from Homo sapiens (Human).